A 288-amino-acid polypeptide reads, in one-letter code: Histone-lysine N-methyltransferase Suv4-20 (288 aa).

Residues 128 to 238 form the SET domain; sequence QECKRYSQEG…PGDEITCFYG (111 aa).

It belongs to the class V-like SAM-binding methyltransferase superfamily. Histone-lysine methyltransferase family. Suvar4-20 subfamily.

It localises to the nucleus. Its subcellular location is the chromosome. It catalyses the reaction N(6)-methyl-L-lysyl(20)-[histone H4] + S-adenosyl-L-methionine = N(6),N(6)-dimethyl-L-lysyl(20)-[histone H4] + S-adenosyl-L-homocysteine + H(+). It carries out the reaction N(6),N(6)-dimethyl-L-lysyl(20)-[histone H4] + S-adenosyl-L-methionine = N(6),N(6),N(6)-trimethyl-L-lysyl(20)-[histone H4] + S-adenosyl-L-homocysteine + H(+). In terms of biological role, histone methyltransferase that specifically di- and trimethylates 'Lys-20' of histone H4 (H4K20me2/me3). H4 'Lys-20' trimethylation represents a specific tag for epigenetic transcriptional repression. Contributes to dosage compensation of X chromosome-relative to autosome-linked gene expression, possibly by converting H4K20me1 to H4K20m2/me3 on autosomes. Involved in the regulation of growth and body fat metabolism downstream of the TOR complex 2 pathway. The polypeptide is Histone-lysine N-methyltransferase Suv4-20 (set-4) (Caenorhabditis elegans).